The sequence spans 280 residues: MHKIQKMSCTPSVRSRYTLKRKRLNSAKSATLKKKKVFLSNSEFFAGVSTNYELGKDFLREMDTPICTSNTVFLPVKFSDVAPGRCLTLSPYGHSSVLGFHCQECKPDSSSGFTQAQQSAESNELLSVNLCFLNNVEKVVQHKAFYLSLLGHSMNTVKQSLGQPSLLYCYTVLKKFYPQIFPIFTANGPMLTMYIIFTSLTLHVSEAVLRILTDNVENHNLSADCYKGHYILSIEPQALEESNLNVCVTKICDLVAQLDFSDELKQEYVNGSTLIANFLN.

The CCCH-type zinc finger occupies 86–203; it reads CLTLSPYGHS…YIIFTSLTLH (118 aa).

It belongs to the herpesviridae NEC1 protein family. In terms of assembly, forms a heterohexameric complex with NEC2. Interacts with capsid vertex specific component 2/CVC2; this interaction directs the capsid to the host inner nuclear membrane to initiate budding. Phosphorylated at serine residues in the N-terminus. This phosphorylation regulates the localization within the inner nuclear membrane.

It localises to the host nucleus inner membrane. Its function is as follows. Plays an essential role in virion nuclear egress, the first step of virion release from infected cell. Within the host nucleus, NEC1 interacts with the newly formed capsid through the vertexes and directs it to the inner nuclear membrane by associating with NEC2. Induces the budding of the capsid at the inner nuclear membrane as well as its envelopment into the perinuclear space. There, the NEC1/NEC2 complex promotes the fusion of the enveloped capsid with the outer nuclear membrane and the subsequent release of the viral capsid into the cytoplasm where it will reach the secondary budding sites in the host Golgi or trans-Golgi network. In Alcelaphine herpesvirus 1 (strain C500) (AlHV-1), this protein is Nuclear egress protein 1.